A 249-amino-acid polypeptide reads, in one-letter code: Acidic leucine-rich nuclear phosphoprotein 32 family member A (249 aa).

T15 carries the phosphothreonine modification. Residue S17 is modified to Phosphoserine. 4 LRR repeats span residues 18–38 (DVKE…EGLT), 43–64 (ELEF…PKLN), 65–87 (KLKK…AEKC), and 89–110 (NLTH…EPLK). An LRRCT domain is found at 123–161 (CEVTNLNDYRENVFKLLPQLTYLDGYDRDDKEAPDSDAE). The segment covering 147 to 156 (GYDRDDKEAP) has biased composition (basic and acidic residues). Positions 147–249 (GYDRDDKEAP…EPEDEGEDDD (103 aa)) are disordered. The interval 150–174 (RDDKEAPDSDAEGYVEGLDDEEEDE) is necessary for tumor-suppressive function. Acidic residues predominate over residues 157-230 (DSDAEGYVEG…DEEDEEELGE (74 aa)). Residues S158 and S204 each carry the phosphoserine; by CK2 modification. The interaction with E4F1 stretch occupies residues 165-249 (EGLDDEEEDE…EPEDEGEDDD (85 aa)).

The protein belongs to the ANP32 family. As to quaternary structure, component of the SET complex, composed of at least ANP32A, APEX1, HMGB2, NME1, SET and TREX1. Directly interacts with SET. Interacts with ATXN1/SCA1. Interacts with MAP1B. Interacts with ELAVL1. Part of the INHAT (inhibitor of histone acetyltransferases) complex. Interacts with E4F1. (Microbial infection) Interacts (via C-terminus) with influenza virus A protein PB2; this interaction promotes viral replication. In terms of assembly, (Microbial infection) Interacts (via C-terminus) with influenza virus B protein PB2; this interaction promotes viral replication. As to quaternary structure, (Microbial infection) Interacts (via C-terminus) with influenza virus C protein PB2; this interaction promotes viral replication by bridging viral replicase dimers together. In terms of processing, phosphorylated on serine residues, at least in part by casein kinase 2/CK2. Post-translationally, the N-terminus is blocked. Some glutamate residues are glycylated by TTLL8. This modification occurs exclusively on glutamate residues and results in a glycine chain on the gamma-carboxyl group. In terms of tissue distribution, expressed in all tissues tested. Highly expressed in kidney and skeletal muscle, moderate levels of expression in brain, placenta and pancreas, and weakly expressed in lung. Found in all regions of the brain examined (amygdala, caudate nucleus, corpus callosum, hippocampus and thalamus), with highest levels in amygdala.

It is found in the nucleus. It localises to the cytoplasm. Its subcellular location is the endoplasmic reticulum. Its function is as follows. Multifunctional protein that is involved in the regulation of many processes including tumor suppression, apoptosis, cell cycle progression or transcription. Promotes apoptosis by favouring the activation of caspase-9/CASP9 and allowing apoptosome formation. In addition, plays a role in the modulation of histone acetylation and transcription as part of the INHAT (inhibitor of histone acetyltransferases) complex. Inhibits the histone-acetyltranferase activity of EP300/CREBBP (CREB-binding protein) and EP300/CREBBP-associated factor by histone masking. Preferentially binds to unmodified histone H3 and sterically inhibiting its acetylation and phosphorylation leading to cell growth inhibition. Participates in other biochemical processes such as regulation of mRNA nuclear-to-cytoplasmic translocation and stability by its association with ELAVL1 (Hu-antigen R). Plays a role in E4F1-mediated transcriptional repression as well as inhibition of protein phosphatase 2A. In terms of biological role, (Microbial infection) Plays an essential role in influenza A, B and C viral genome replication. Mechanistically, mediates the assembly of the viral replicase asymmetric dimers composed of PB1, PB2 and PA via its N-terminal region. Also plays an essential role in foamy virus mRNA export from the nucleus. This chain is Acidic leucine-rich nuclear phosphoprotein 32 family member A (ANP32A), found in Homo sapiens (Human).